The chain runs to 251 residues: Capsid protein (251 aa).

The short motif at 3 to 20 (KRDAPWRSMAGTSKVSRN) is the Bipartite nuclear localization signal element. Residues 35–49 (KAAAWVNRPMYRKPR) carry the Nuclear localization signal motif. The segment at 63–80 (CEGPCKVQSYEQRHDISH) is a zinc-finger region. Positions 96–117 (ITHRVGKRFCVKSVYILGKIWM) match the Nuclear export signal motif. A Bipartite nuclear localization signal motif is present at residues 195 to 242 (KRFWKVNNYVVYNHQEAGKYENHTENALLLYMACTHASNPVYATLKIR).

The protein belongs to the geminiviridae capsid protein family. Homomultimer. Binds to single-stranded and double-stranded viral DNA. Interacts (via nuclear localization signals) with host importin alpha-1a.

Its subcellular location is the virion. It localises to the host nucleus. Its function is as follows. Encapsidates the viral DNA into characteristic twinned ('geminate') particles. Binds the genomic viral ssDNA and shuttles it into and out of the cell nucleus. The CP of bipartite geminiviruses is not required for cell-to-cell or systemic movement. This is Capsid protein from Cabbage leaf curl virus (isolate Jamaica) (CaLCuV).